A 443-amino-acid polypeptide reads, in one-letter code: 23S rRNA (uracil(1939)-C(5))-methyltransferase RlmD (443 aa).

A TRAM domain is found at 12 to 70 (AKKLSQKIALKVQRLDHLGAGIAEHQGKVVFIPGALPGETVEVQLTEQKKNYARAKLQR). Positions 83, 89, 92, and 171 each coordinate [4Fe-4S] cluster. S-adenosyl-L-methionine is bound by residues Q276, F305, N310, E326, D353, and D373. The Nucleophile role is filled by C399.

The protein belongs to the class I-like SAM-binding methyltransferase superfamily. RNA M5U methyltransferase family. RlmD subfamily.

The catalysed reaction is uridine(1939) in 23S rRNA + S-adenosyl-L-methionine = 5-methyluridine(1939) in 23S rRNA + S-adenosyl-L-homocysteine + H(+). Functionally, catalyzes the formation of 5-methyl-uridine at position 1939 (m5U1939) in 23S rRNA. This is 23S rRNA (uracil(1939)-C(5))-methyltransferase RlmD from Shewanella amazonensis (strain ATCC BAA-1098 / SB2B).